Reading from the N-terminus, the 115-residue chain is MKVIAAFLLAKLGGNENPTSNDLKKILESVGAEIDETKIDLLFSLIKDHDVTELIAAGREKMSALSSGGPAVAMVAGGGGGGAASAAEPVAESKKKVEEVKDESSDDAGMMGLFD.

Residues 78–115 form a disordered region; that stretch reads GGGGGAASAAEPVAESKKKVEEVKDESSDDAGMMGLFD. The span at 91 to 103 shows a compositional bias: basic and acidic residues; it reads AESKKKVEEVKDE. A phosphoserine mark is found at Ser104 and Ser105.

Belongs to the eukaryotic ribosomal protein P1/P2 family. P1 and P2 exist as dimers at the large ribosomal subunit.

Plays an important role in the elongation step of protein synthesis. The polypeptide is Large ribosomal subunit protein P2x (RPP2C) (Arabidopsis thaliana (Mouse-ear cress)).